A 433-amino-acid chain; its full sequence is ATP-dependent protease ATPase subunit HslU (433 aa).

ATP is bound by residues Val-18, 60 to 65, Asp-246, Glu-311, and Arg-383; that span reads GVGKTE.

It belongs to the ClpX chaperone family. HslU subfamily. In terms of assembly, a double ring-shaped homohexamer of HslV is capped on each side by a ring-shaped HslU homohexamer. The assembly of the HslU/HslV complex is dependent on binding of ATP.

Its subcellular location is the cytoplasm. Functionally, ATPase subunit of a proteasome-like degradation complex; this subunit has chaperone activity. The binding of ATP and its subsequent hydrolysis by HslU are essential for unfolding of protein substrates subsequently hydrolyzed by HslV. HslU recognizes the N-terminal part of its protein substrates and unfolds these before they are guided to HslV for hydrolysis. This chain is ATP-dependent protease ATPase subunit HslU, found in Rhodopseudomonas palustris (strain ATCC BAA-98 / CGA009).